We begin with the raw amino-acid sequence, 225 residues long: Thymidylate kinase (225 aa).

10-17 (GGEGAGKT) lines the ATP pocket.

Belongs to the thymidylate kinase family.

It catalyses the reaction dTMP + ATP = dTDP + ADP. Phosphorylation of dTMP to form dTDP in both de novo and salvage pathways of dTTP synthesis. The polypeptide is Thymidylate kinase (Oceanobacillus iheyensis (strain DSM 14371 / CIP 107618 / JCM 11309 / KCTC 3954 / HTE831)).